Consider the following 245-residue polypeptide: Protein mlo1 (245 aa).

One can recognise an SAP domain in the interval 4–38 (YKSLKVAELREKLAEKGLSTAGNKAELVSRLTAAT). The disordered stretch occupies residues 32–245 (SRLTAATESN…AERFGVAAKN (214 aa)). Residues 37–52 (ATESNDENTSNNNATD) show a composition bias toward low complexity. A compositionally biased stretch (acidic residues) spans 58–70 (PPEDDIDWGDMEN). A compositionally biased stretch (polar residues) spans 109 to 118 (TSQAPETSTG). The segment covering 119-130 (AEEHQETTEESK) has biased composition (basic and acidic residues). Residue Ser139 is modified to Phosphoserine. Positions 182–196 (SSNNKNHNQSKNPQN) are enriched in low complexity.

It belongs to the SAP domain-containing ribonucleoprotein family.

The protein is Protein mlo1 (mlo1) of Schizosaccharomyces pombe (strain 972 / ATCC 24843) (Fission yeast).